Reading from the N-terminus, the 118-residue chain is MITLYNTLTRQKETFEPIEPGKVKMYVCGPTVYNYIHIGNARPAINYDVVRRYFEYQGYEVIYVSNFTDVDDKLIKRSKELDESVETITDRYIKAFYEDVGALNVKKATSNPRVMNHM.

Residue Cys-28 participates in Zn(2+) binding. The 'HIGH' region signature appears at 30–40 (PTVYNYIHIGN).

Belongs to the class-I aminoacyl-tRNA synthetase family. As to quaternary structure, monomer. Zn(2+) is required as a cofactor.

The protein localises to the cytoplasm. The enzyme catalyses tRNA(Cys) + L-cysteine + ATP = L-cysteinyl-tRNA(Cys) + AMP + diphosphate. The sequence is that of Cysteine--tRNA ligase (cysS) from Staphylococcus xylosus.